We begin with the raw amino-acid sequence, 401 residues long: Dual specificity mitogen-activated protein kinase kinase 2 (401 aa).

Methionine 1 is modified (N-acetylmethionine). The residue at position 23 (serine 23) is a Phosphoserine. The region spanning 72 to 370 (FERISELGAG…LKLLMNHAFI (299 aa)) is the Protein kinase domain. Residues 78-86 (LGAGNGGVV) and lysine 101 each bind ATP. Residue aspartate 194 is the Proton acceptor of the active site. Phosphoserine; by RAF is present on residues serine 222 and serine 226. The interval 282-310 (PVVDGADGEPHSVSPRPRPPGRPISVGHG) is disordered. Phosphoserine occurs at positions 293, 295, and 306. Threonine 395 and threonine 397 each carry phosphothreonine.

This sequence belongs to the protein kinase superfamily. STE Ser/Thr protein kinase family. MAP kinase kinase subfamily. Interacts with MORG1. Interacts with SGK1. Interacts with KSR1. Interacts with KSR1 and BRAF; the interaction with KSR1 mediates KSR1-BRAF dimerization. Interacts with GLS. Requires Mg(2+) as cofactor. Phosphorylation on Ser/Thr by MAP kinase kinase kinases (RAF or MEKK1) positively regulates the kinase activity. Phosphorylated by MAP2K1/MEK1. Low levels of autophosphorylation have been observed. As to expression, expressed in adult intestine, kidney, liver, lung, pancreas, spleen, thymus, and at high levels in the neonatal brain. Lower expression is found in adult brain and heart.

Its subcellular location is the cytoplasm. The protein resides in the membrane. The enzyme catalyses L-seryl-[protein] + ATP = O-phospho-L-seryl-[protein] + ADP + H(+). It catalyses the reaction L-threonyl-[protein] + ATP = O-phospho-L-threonyl-[protein] + ADP + H(+). The catalysed reaction is L-tyrosyl-[protein] + ATP = O-phospho-L-tyrosyl-[protein] + ADP + H(+). Its activity is regulated as follows. Inhibited by serine/threonine phosphatase 2A. Catalyzes the concomitant phosphorylation of a threonine and a tyrosine residue in a Thr-Glu-Tyr sequence located in MAP kinases. Activates the ERK1 and ERK2 MAP kinases. Activates BRAF in a KSR1 or KSR2-dependent manner; by binding to KSR1 or KSR2 releases the inhibitory intramolecular interaction between KSR1 or KSR2 protein kinase and N-terminal domains which promotes KSR1 or KSR2-BRAF dimerization and BRAF activation. The chain is Dual specificity mitogen-activated protein kinase kinase 2 (Map2k2) from Mus musculus (Mouse).